The sequence spans 237 residues: Small ribosomal subunit protein uS3 (237 aa).

Residues isoleucine 39–arginine 107 form the KH type-2 domain. Residues methionine 213–alanine 237 form a disordered region.

This sequence belongs to the universal ribosomal protein uS3 family. As to quaternary structure, part of the 30S ribosomal subunit. Forms a tight complex with proteins S10 and S14.

In terms of biological role, binds the lower part of the 30S subunit head. Binds mRNA in the 70S ribosome, positioning it for translation. In Sinorhizobium fredii (strain NBRC 101917 / NGR234), this protein is Small ribosomal subunit protein uS3.